The sequence spans 153 residues: Regulatory protein RecX (153 aa).

The protein belongs to the RecX family.

It localises to the cytoplasm. Functionally, modulates RecA activity. This is Regulatory protein RecX from Syntrophotalea carbinolica (strain DSM 2380 / NBRC 103641 / GraBd1) (Pelobacter carbinolicus).